Consider the following 282-residue polypeptide: NH(3)-dependent NAD(+) synthetase (282 aa).

ATP is bound at residue 51–58; that stretch reads GISGGVDS. D57 is a binding site for Mg(2+). Position 148 (R148) interacts with deamido-NAD(+). T168 is a binding site for ATP. Residue E173 participates in Mg(2+) binding. Deamido-NAD(+)-binding residues include K181 and D188. Residues K197 and T219 each coordinate ATP. 268 to 269 lines the deamido-NAD(+) pocket; it reads HK.

The protein belongs to the NAD synthetase family. Homodimer.

It carries out the reaction deamido-NAD(+) + NH4(+) + ATP = AMP + diphosphate + NAD(+) + H(+). Its pathway is cofactor biosynthesis; NAD(+) biosynthesis; NAD(+) from deamido-NAD(+) (ammonia route): step 1/1. Functionally, catalyzes the ATP-dependent amidation of deamido-NAD to form NAD. Uses ammonia as a nitrogen source. The chain is NH(3)-dependent NAD(+) synthetase from Burkholderia lata (strain ATCC 17760 / DSM 23089 / LMG 22485 / NCIMB 9086 / R18194 / 383).